A 340-amino-acid polypeptide reads, in one-letter code: Protein arginine N-methyltransferase 6 (340 aa).

The 325-residue stretch at 15 to 339 (DQEYFQCYSD…LRRTKHFHMG (325 aa)) folds into the SAM-dependent MTase PRMT-type domain. 5 residues coordinate S-adenosyl-L-methionine: His-28, Arg-37, Gly-61, Glu-83, and Glu-112. Active-site residues include Glu-126 and Glu-135.

This sequence belongs to the class I-like SAM-binding methyltransferase superfamily. Protein arginine N-methyltransferase family. PRMT6 subfamily.

Its subcellular location is the nucleus. It carries out the reaction L-arginyl-[protein] + 2 S-adenosyl-L-methionine = N(omega),N(omega)-dimethyl-L-arginyl-[protein] + 2 S-adenosyl-L-homocysteine + 2 H(+). In terms of biological role, arginine methyltransferase that can catalyze the formation of both omega-N monomethylarginine (MMA) and asymmetrical dimethylarginine (aDMA), with a strong preference for the formation of aDMA. Preferentially methylates arginyl residues present in a glycine and arginine-rich domain and displays preference for monomethylated substrates. Specifically mediates the asymmetric dimethylation of histone H3 'Arg-2' to form H3R2me2a. H3R2me2a represents a specific tag for epigenetic transcriptional repression and is mutually exclusive with methylation on histone H3 'Lys-4' (H3K4me2 and H3K4me3). Acts as a transcriptional repressor of various genes such as HOXA2, THBS1 and TP53. Repression of TP53 blocks cellular senescence. Also methylates histone H2A and H4 'Arg-3' (H2AR3me and H4R3me, respectively). Acts as a regulator of DNA base excision during DNA repair by mediating the methylation of DNA polymerase beta (POLB), leading to the stimulation of its polymerase activity by enhancing DNA binding and processivity. Methylates HMGA1. Regulates alternative splicing events. Acts as a transcriptional coactivator of a number of steroid hormone receptors including ESR1, ESR2, PGR and NR3C1. This chain is Protein arginine N-methyltransferase 6 (prmt6), found in Xenopus laevis (African clawed frog).